Here is a 121-residue protein sequence, read N- to C-terminus: Large ribosomal subunit protein uL14 (121 aa).

The protein belongs to the universal ribosomal protein uL14 family. Part of the 50S ribosomal subunit. Forms a cluster with proteins L3 and L19. In the 70S ribosome, L14 and L19 interact and together make contacts with the 16S rRNA in bridges B5 and B8.

Its function is as follows. Binds to 23S rRNA. Forms part of two intersubunit bridges in the 70S ribosome. In Prochlorococcus marinus (strain MIT 9211), this protein is Large ribosomal subunit protein uL14.